The chain runs to 396 residues: Tryptophan synthase beta chain (396 aa).

Residue Lys-88 is modified to N6-(pyridoxal phosphate)lysine.

The protein belongs to the TrpB family. In terms of assembly, tetramer of two alpha and two beta chains. Pyridoxal 5'-phosphate is required as a cofactor.

It carries out the reaction (1S,2R)-1-C-(indol-3-yl)glycerol 3-phosphate + L-serine = D-glyceraldehyde 3-phosphate + L-tryptophan + H2O. The protein operates within amino-acid biosynthesis; L-tryptophan biosynthesis; L-tryptophan from chorismate: step 5/5. Functionally, the beta subunit is responsible for the synthesis of L-tryptophan from indole and L-serine. The chain is Tryptophan synthase beta chain from Actinobacillus pleuropneumoniae serotype 7 (strain AP76).